A 303-amino-acid chain; its full sequence is MATIVPTLFSFVRDTYKGRFDVATFEREVGRDFDNQEIAQAISKYEQEAKNLRNKDEIRKVIQYIDLTTLNGDDTASKVVALAKRAINPVPTDPSIHCGSVCVYPQRIADVKKFLASSKLNSNITSVAGGFPSGQYHLKSKVLEVELSVADGATEIDIVISRASALDEDWKTVHDEVLACKKACGSAHLKTILATGELKTLSNVYRASWASILAGSDFIKTSTGKESVNATLEVAYVMCTAIKRWHELTGKKVGFKPAGGIKTVDEALSYVALVKDILGDEWLNPHLFRIGASSLLDDCLKGL.

The active-site Proton donor/acceptor is the Asp-157. Residue Lys-220 is the Schiff-base intermediate with acetaldehyde of the active site. Catalysis depends on Lys-256, which acts as the Proton donor/acceptor.

This sequence belongs to the DeoC/FbaB aldolase family. DeoC type 2 subfamily.

The enzyme catalyses 2-deoxy-D-ribose 5-phosphate = D-glyceraldehyde 3-phosphate + acetaldehyde. The protein operates within carbohydrate degradation; 2-deoxy-D-ribose 1-phosphate degradation; D-glyceraldehyde 3-phosphate and acetaldehyde from 2-deoxy-alpha-D-ribose 1-phosphate: step 2/2. Catalyzes a reversible aldol reaction between acetaldehyde and D-glyceraldehyde 3-phosphate to generate 2-deoxy-D-ribose 5-phosphate. The polypeptide is Putative deoxyribose-phosphate aldolase (Caenorhabditis elegans).